The chain runs to 84 residues: MSEFWLCFSCCIAEQPQPKRRRRIDRSMIGEPTNFAHTAHVGSGDLFSGMNSVSSIQNQMQSKGGYGGGMPANVQMQLVDTKAG.

Residues cysteine 10 and cysteine 11 are each lipidated (S-palmitoyl cysteine). Positions 29-42 (IGEPTNFAHTAHVG) constitute a CRIB domain. Residues serine 43 and serine 52 each carry the phosphoserine modification.

This sequence belongs to the CDC42SE/SPEC family. In terms of assembly, interacts with CDC42 (in GTP-bound form). Interacts weakly with RAC1 and not at all with RHOA.

The protein localises to the cytoplasm. Its subcellular location is the cytoskeleton. It is found in the cell membrane. It localises to the cell projection. The protein resides in the phagocytic cup. In terms of biological role, probably involved in the organization of the actin cytoskeleton by acting downstream of CDC42, inducing actin filament assembly. Alters CDC42-induced cell shape changes. In activated T-cells, may play a role in CDC42-mediated F-actin accumulation at the immunological synapse. May play a role in early contractile events in phagocytosis in macrophages. The protein is CDC42 small effector protein 2 (CDC42SE2) of Pongo abelii (Sumatran orangutan).